The chain runs to 1148 residues: Envelopment polyprotein (1148 aa).

An N-terminal signal peptide occupies residues 1-23; sequence MGELSPVCLCLLLQGLLLCNTGA. At 24–496 the chain is on the lumenal side; the sequence is ARNLNELKME…PGLHGWATML (473 aa). Disulfide bonds link Cys-34/Cys-159, Cys-68/Cys-165, Cys-117/Cys-136, Cys-141/Cys-146, Cys-183/Cys-193, and Cys-218/Cys-257. N-linked (GlcNAc...) asparagine; by host glycosylation is present at Asn-142. N-linked (GlcNAc...) asparagine; by host glycosylation occurs at Asn-357. Disulfide bonds link Cys-386-Cys-445, Cys-390-Cys-399, Cys-415-Cys-434, and Cys-462-Cys-485. Asn-409 carries N-linked (GlcNAc...) asparagine; by host glycosylation. Residues 497-517 form a helical membrane-spanning segment; the sequence is LLLTFCFGWVLIPTITMILLK. Over 518 to 637 the chain is Cytoplasmic; it reads ILIAFAYLCS…LSLFRYRSRF (120 aa). The segment at 526-543 is binding to the ribonucleoprotein; sequence CSKYNTDSKFRILIEKVK. 2 consecutive CCHC-type zinc fingers follow at residues 555–575 and 580–601; these read CEVC…RKSC and CPYC…FKVC. Binding to the ribonucleoprotein stretches follow at residues 598–615, 602–613, and 621–635; these read FKVC…RKSL, KLTSRFQENLRK, and MQGC…RYRS. An ITAM domain is found at 621-644; it reads MQGCYRTLSLFRYRSRFFVGLVWC. A YxxL motif is present at residues 625–628; sequence YRTL. A helical transmembrane segment spans residues 638-658; sequence FVGLVWCVLLVLELIVWAASA. The Lumenal portion of the chain corresponds to 659–1115; that stretch reads ETQNLNAGWT…WILGVLNGNW (457 aa). Disulfide bonds link Cys-745–Cys-780, Cys-749–Cys-787, Cys-761–Cys-894, Cys-775–Cys-905, Cys-790–Cys-913, Cys-816–Cys-825, Cys-833–Cys-842, and Cys-873–Cys-877. Residues 767-787 form a fusion loop region; the sequence is YEYETGWGCNPPDCPGVGTGC. Asn-937 carries N-linked (GlcNAc...) asparagine; by host glycosylation. 5 cysteine pairs are disulfide-bonded: Cys-979–Cys-1009, Cys-1002–Cys-1054, Cys-1019–Cys-1024, Cys-1055–Cys-1060, and Cys-1094–Cys-1098. The helical transmembrane segment at 1116 to 1136 threads the bilayer; sequence MVVAVLVVLLILSILLFTLCC. Binding to the ribonucleoprotein regions lie at residues 1131–1143 and 1131–1148; these read LFTL…PSYR and LFTL…EHKP. Residues 1137–1148 lie on the Cytoplasmic side of the membrane; it reads PRRPSYRKEHKP.

This sequence belongs to the hantavirus envelope glycoprotein family. In terms of assembly, homodimer. Homotetramer; forms heterotetrameric Gn-Gc spikes in the pre-fusion conformation. Interacts (via C-terminus) with the nucleoprotein. Interacts with host TUFM; this interaction contributes to the virus-induced degradation of mitochondria by autophagy, which leads to degradation of host MAVS and inhibition of type I interferon (IFN) responses. Interacts with host MAP1LC3B; this interaction contributes to the virus-induced degradation of mitochondria by autophagy, which leads to degradation of host MAVS and inhibition of type I interferon (IFN) responses. As to quaternary structure, homodimer. Homotetramer; forms heterotetrameric Gn-Gc spikes in the pre-fusion conformation. Homotrimer; forms homotrimer in the post-fusion conformation at acidic pH. Interacts (via C-terminus) with the nucleoprotein. Post-translationally, envelope polyprotein precursor is quickly cleaved in vivo just after synthesis, presumably by host signal peptidase.

The protein resides in the virion membrane. It is found in the host cell surface. It localises to the host Golgi apparatus membrane. The protein localises to the host endoplasmic reticulum membrane. Its subcellular location is the host mitochondrion. In terms of biological role, forms homotetramers with glycoprotein C at the surface of the virion. Attaches the virion to host cell receptors including integrin ITGAV/ITGB3. This attachment induces virion internalization predominantly through clathrin-dependent endocytosis. Mediates the assembly and budding of infectious virus particles through its interaction with the nucleocapsid protein and the viral genome. May dysregulate normal immune and endothelial cell responses through an ITAM motif. Translocates to mitochondria, binds to host TUFM and recruits MAP1LC3B. These interactions induce mitochondrial autophagy and therefore destruction of host MAVS leading to inhibition of type I interferon (IFN) responses. Concomitant breakdown of glycoprotein N is apparently prevented by the nucleoprotein that may inhibit Gn-stimulated autophagosome-lysosome fusion. Interacts with the viral genomic RNA. Forms homotetramers with glycoprotein N at the surface of the virion. Attaches the virion to host cell receptors including integrin ITGAV/ITGB3. This attachment induces virion internalization predominantly through clathrin-dependent endocytosis. Class II fusion protein that promotes fusion of viral membrane with host endosomal membrane after endocytosis of the virion. The polypeptide is Envelopment polyprotein (GP) (Homo sapiens (Human)).